The following is a 353-amino-acid chain: Histidinol-phosphate aminotransferase (353 aa).

An N6-(pyridoxal phosphate)lysine modification is found at K211.

Belongs to the class-II pyridoxal-phosphate-dependent aminotransferase family. Histidinol-phosphate aminotransferase subfamily. Homodimer. Requires pyridoxal 5'-phosphate as cofactor.

It catalyses the reaction L-histidinol phosphate + 2-oxoglutarate = 3-(imidazol-4-yl)-2-oxopropyl phosphate + L-glutamate. It functions in the pathway amino-acid biosynthesis; L-histidine biosynthesis; L-histidine from 5-phospho-alpha-D-ribose 1-diphosphate: step 7/9. The polypeptide is Histidinol-phosphate aminotransferase (Marinomonas sp. (strain MWYL1)).